Consider the following 299-residue polypeptide: GTPase Era (299 aa).

Residues 5–172 form the Era-type G domain; the sequence is KSGFVSIIGR…IDVLKSFLPE (168 aa). The segment at 13-20 is G1; it reads GRPNVGKS. 13 to 20 lines the GTP pocket; the sequence is GRPNVGKS. The segment at 39–43 is G2; the sequence is QTTRN. Residues 60 to 63 are G3; sequence DTPG. GTP contacts are provided by residues 60 to 64 and 122 to 125; these read DTPGI and NKID. The G4 stretch occupies residues 122–125; the sequence is NKID. Residues 151–153 form a G5 region; the sequence is ISA. Residues 203–280 form the KH type-2 domain; that stretch reads TSEEIPHAIG…YLELWVKVQR (78 aa).

The protein belongs to the TRAFAC class TrmE-Era-EngA-EngB-Septin-like GTPase superfamily. Era GTPase family. Monomer.

The protein resides in the cytoplasm. The protein localises to the cell membrane. An essential GTPase that binds both GDP and GTP, with rapid nucleotide exchange. Plays a role in 16S rRNA processing and 30S ribosomal subunit biogenesis and possibly also in cell cycle regulation and energy metabolism. In Staphylococcus epidermidis (strain ATCC 35984 / DSM 28319 / BCRC 17069 / CCUG 31568 / BM 3577 / RP62A), this protein is GTPase Era.